The primary structure comprises 108 residues: Phosphoribosyl-ATP pyrophosphatase (108 aa).

It belongs to the PRA-PH family.

It localises to the cytoplasm. It catalyses the reaction 1-(5-phospho-beta-D-ribosyl)-ATP + H2O = 1-(5-phospho-beta-D-ribosyl)-5'-AMP + diphosphate + H(+). The protein operates within amino-acid biosynthesis; L-histidine biosynthesis; L-histidine from 5-phospho-alpha-D-ribose 1-diphosphate: step 2/9. The chain is Phosphoribosyl-ATP pyrophosphatase from Thiobacillus denitrificans (strain ATCC 25259 / T1).